A 119-amino-acid polypeptide reads, in one-letter code: MMNKKDARLRRARQTRAKIAEMKVNRLTVFRTNSHIYAQVFSECGTKVLASASTAEVEVRKELDGKGATAAAATVVGKRIAEKAKAAGVETVAFDRAGFRFHGRVKALADAAREAGLKF.

This sequence belongs to the universal ribosomal protein uL18 family. Part of the 50S ribosomal subunit; part of the 5S rRNA/L5/L18/L25 subcomplex. Contacts the 5S and 23S rRNAs.

This is one of the proteins that bind and probably mediate the attachment of the 5S RNA into the large ribosomal subunit, where it forms part of the central protuberance. This chain is Large ribosomal subunit protein uL18, found in Cupriavidus necator (strain ATCC 17699 / DSM 428 / KCTC 22496 / NCIMB 10442 / H16 / Stanier 337) (Ralstonia eutropha).